The following is a 218-amino-acid chain: Large ribosomal subunit protein eL14 (218 aa).

Lys79 is subject to N6-acetyllysine. Lys85 is subject to N6-acetyllysine; alternate. Lys85 is subject to N6-succinyllysine; alternate. Lys124 is covalently cross-linked (Glycyl lysine isopeptide (Lys-Gly) (interchain with G-Cter in SUMO2)). Ser139 is subject to Phosphoserine. The interval 159 to 218 (VPAKKATAAGKKAAAQKAPAQKAPAQKAAGQKAAQPPKAQKGQKPPAQKAPAPKASGKKA) is disordered. 6 repeat units span residues 174-178 (QKAPA), 179-183 (QKAPA), 184-188 (QKAAG), 189-193 (QKAAQ), 196-198 (KAQ), and 199-201 (KGQ). A 4 X 5 AA tandem repeats of Q-K-A-[PAS]-X region spans residues 174-193 (QKAPAQKAPAQKAAGQKAAQ). Residues 196–201 (KAQKGQ) form a 2 X 3 AA tandem repeats of K-[GA]-Q region. The residue at position 207 (Lys207) is an N6-succinyllysine.

The protein belongs to the eukaryotic ribosomal protein eL14 family. In terms of assembly, component of the large ribosomal subunit.

The protein resides in the cytoplasm. Component of the large ribosomal subunit. The ribosome is a large ribonucleoprotein complex responsible for the synthesis of proteins in the cell. The sequence is that of Large ribosomal subunit protein eL14 (RPL14) from Oryctolagus cuniculus (Rabbit).